The following is a 397-amino-acid chain: Ethanolaminephosphotransferase 1 (397 aa).

At A2 the chain carries N-acetylalanine. 10 helical membrane passes run 47-69, 84-103, 123-145, 150-172, 179-201, 221-243, 256-278, 291-310, 317-339, and 344-366; these read WLAP…LLMA, HVPD…AYTL, LFDH…SIFG, GVSV…LSHW, ILFL…IVTA, LFTA…LNFF, VYEA…AWIL, VFYF…LIVC, CPTL…LGVA, and SILL…VRVV. Position 387 (U387) is a non-standard amino acid, selenocysteine.

It belongs to the CDP-alcohol phosphatidyltransferase class-I family. Requires Mg(2+) as cofactor. Mn(2+) is required as a cofactor. As to expression, widely expressed. Abundant in brain, placenta, liver and pancreas, followed by heart, skeletal muscle, lung and kidney. In brain it is strongly expressed in cerebellum, followed by the occipital pole and the frontal lobe.

The protein localises to the endoplasmic reticulum membrane. It catalyses the reaction CDP-ethanolamine + a 1,2-diacyl-sn-glycerol = a 1,2-diacyl-sn-glycero-3-phosphoethanolamine + CMP + H(+). It carries out the reaction 1-O-alkyl-2-acyl-sn-glycerol + CDP-ethanolamine = a 1-O-alkyl-2-acyl-sn-glycero-3-phosphoethanolamine + CMP + H(+). The protein operates within phospholipid metabolism; phosphatidylethanolamine biosynthesis; phosphatidylethanolamine from ethanolamine: step 3/3. In terms of biological role, ethanolaminephosphotransferase that catalyzes the transfer of phosphoethanolamine (PE) from CDP-ethanolamine to lipid acceptors, the final step in the synthesis of PE via the 'Kennedy' pathway. PE is the second most abundant phospholipid of membranes in mammals and is involved in various membrane-related cellular processes. The enzyme is critical for the synthesis of several PE species and also catalyzes the synthesis of plasmanyl-PE, a lipid required for proper myelination and neurodevelopment, from 1-alkyl-2-acylglycerol. The chain is Ethanolaminephosphotransferase 1 from Homo sapiens (Human).